The sequence spans 344 residues: Arginine N-succinyltransferase (344 aa).

A succinyl-CoA-binding site is contributed by Leu125. His229 (proton donor) is an active-site residue.

This sequence belongs to the arginine N-succinyltransferase family.

The enzyme catalyses succinyl-CoA + L-arginine = N(2)-succinyl-L-arginine + CoA + H(+). The protein operates within amino-acid degradation; L-arginine degradation via AST pathway; L-glutamate and succinate from L-arginine: step 1/5. Its function is as follows. Catalyzes the transfer of succinyl-CoA to arginine to produce N(2)-succinylarginine. The protein is Arginine N-succinyltransferase of Enterobacter sp. (strain 638).